We begin with the raw amino-acid sequence, 512 residues long: Cytochrome P450 26B1 (512 aa).

Cys-441 serves as a coordination point for heme.

It belongs to the cytochrome P450 family. It depends on heme as a cofactor.

Its subcellular location is the endoplasmic reticulum membrane. The protein localises to the microsome membrane. The enzyme catalyses all-trans-retinoate + reduced [NADPH--hemoprotein reductase] + O2 = all-trans-4-hydroxyretinoate + oxidized [NADPH--hemoprotein reductase] + H2O + H(+). It carries out the reaction all-trans-retinoate + reduced [NADPH--hemoprotein reductase] + O2 = all-trans-18-hydroxyretinoate + oxidized [NADPH--hemoprotein reductase] + H2O + H(+). A cytochrome P450 monooxygenase involved in the metabolism of retinoates (RAs), the active metabolites of vitamin A, and critical signaling molecules in animals. RAs exist as at least four different isomers: all-trans-RA (atRA), 9-cis-RA, 13-cis-RA, and 9,13-dicis-RA, where atRA is considered to be the biologically active isomer, although 9-cis-RA and 13-cis-RA also have activity. Catalyzes the hydroxylation of atRA primarily at C-4 and C-18, thereby contributing to the regulation of atRA homeostasis and signaling. Hydroxylation of atRA limits its biological activity and initiates a degradative process leading to its eventual elimination. Involved in the convertion of atRA to all-trans-4-oxo-RA. Can oxidize all-trans-13,14-dihydroretinoate (DRA) to metabolites which could include all-trans-4-oxo-DRA, all-trans-4-hydroxy-DRA, all-trans-5,8-epoxy-DRA, and all-trans-18-hydroxy-DRA. Shows preference for the following substrates: atRA &gt; 9-cis-RA &gt; 13-cis-RA. Plays a central role in germ cell development: acts by degrading RAs in the developing testis, preventing STRA8 expression, thereby leading to delay of meiosis. Required for the maintenance of the undifferentiated state of male germ cells during embryonic development in Sertoli cells, inducing arrest in G0 phase of the cell cycle and preventing meiotic entry. Plays a role in skeletal development, both at the level of patterning and in the ossification of bone and the establishment of some synovial joints. Essential for postnatal survival. Functionally, also has a significant activity in oxidation of tazarotenic acid and may therefore metabolize that xenobiotic in vivo. The polypeptide is Cytochrome P450 26B1 (Cyp26b1) (Rattus norvegicus (Rat)).